The following is a 289-amino-acid chain: Thymidylate synthase (289 aa).

DUMP-binding positions include Arg-21 and 150–151; that span reads RR. The active-site Nucleophile is Cys-170. DUMP contacts are provided by residues 191 to 194, Asn-202, and 232 to 234; these read RSAD and HIY. Residue Asp-194 participates in (6R)-5,10-methylene-5,6,7,8-tetrahydrofolate binding. Ala-288 serves as a coordination point for (6R)-5,10-methylene-5,6,7,8-tetrahydrofolate.

This sequence belongs to the thymidylate synthase family. Bacterial-type ThyA subfamily. In terms of assembly, homodimer.

The protein resides in the cytoplasm. It carries out the reaction dUMP + (6R)-5,10-methylene-5,6,7,8-tetrahydrofolate = 7,8-dihydrofolate + dTMP. It functions in the pathway pyrimidine metabolism; dTTP biosynthesis. In terms of biological role, catalyzes the reductive methylation of 2'-deoxyuridine-5'-monophosphate (dUMP) to 2'-deoxythymidine-5'-monophosphate (dTMP) while utilizing 5,10-methylenetetrahydrofolate (mTHF) as the methyl donor and reductant in the reaction, yielding dihydrofolate (DHF) as a by-product. This enzymatic reaction provides an intracellular de novo source of dTMP, an essential precursor for DNA biosynthesis. This Malacoplasma penetrans (strain HF-2) (Mycoplasma penetrans) protein is Thymidylate synthase.